A 529-amino-acid chain; its full sequence is Bifunctional purine biosynthesis protein PurH (529 aa).

One can recognise an MGS-like domain in the interval 1–148; it reads MQQRRPVRRA…KNHKDVAIVV (148 aa). K287 is modified (N6-acetyllysine).

Belongs to the PurH family.

It catalyses the reaction (6R)-10-formyltetrahydrofolate + 5-amino-1-(5-phospho-beta-D-ribosyl)imidazole-4-carboxamide = 5-formamido-1-(5-phospho-D-ribosyl)imidazole-4-carboxamide + (6S)-5,6,7,8-tetrahydrofolate. The catalysed reaction is IMP + H2O = 5-formamido-1-(5-phospho-D-ribosyl)imidazole-4-carboxamide. It participates in purine metabolism; IMP biosynthesis via de novo pathway; 5-formamido-1-(5-phospho-D-ribosyl)imidazole-4-carboxamide from 5-amino-1-(5-phospho-D-ribosyl)imidazole-4-carboxamide (10-formyl THF route): step 1/1. Its pathway is purine metabolism; IMP biosynthesis via de novo pathway; IMP from 5-formamido-1-(5-phospho-D-ribosyl)imidazole-4-carboxamide: step 1/1. This Escherichia coli O8 (strain IAI1) protein is Bifunctional purine biosynthesis protein PurH.